A 619-amino-acid polypeptide reads, in one-letter code: MDKQSKFRIKTFFKKIIFFLIIFCFFYFFNFIKKTKKITHTTQDKFFELLSKNKINKFIVLNKKKVSFTLNEKKSHLDSNNYNFFSKLHLSRYEFEIGDLQLFQKKIDFYKELYEINPNFEFKNYKIYTVLNFFYDYGFFLMIIIICWIFIFRKIASRSSESEFKFKIGKSKAKLYYYNNITFKDVAGLEGPKEEIKEIVDFLKSPNKYTKLGGKIPKGALLIGPPGTGKTLLAKAVAGEAQVPFFSLSGSDFVEMFVGVGASRVRDLFYIAKLKSPSIIFIDEIDAIGRARIKNNIPGGNDERENTLNKLLTEMDGFSTKTNVIVLAATNRYDVLDDALLRSGRFDRTIFIDLPSLKERKDIMKVHLKKIKFSKSIDLDFISRQIPGFSGADISNICNEAALLAARRNKVKVETKDFIDTIYRRIGGIEKKNILIKKNEKKRIAYHETGHAIISWIIEYAHSVFQITITPRGQSLGAAWYIPEERQITTEDQMKDEICTLLGGRAAEYLIFNNKSTGALNDLERITKQAQSMVKFFGLSSLGNISYFDSTGRNDFSLEKAYSEKTSEIIDKEINKIIKEQYKRALEILKKNYDKLIFLAEKLFKKEVLFKEDFASILD.

Over 1–11 (MDKQSKFRIKT) the chain is Cytoplasmic. Residues 12–32 (FFKKIIFFLIIFCFFYFFNFI) form a helical membrane-spanning segment. Over 33-131 (KKTKKITHTT…FKNYKIYTVL (99 aa)) the chain is Periplasmic. The helical transmembrane segment at 132–152 (NFFYDYGFFLMIIIICWIFIF) threads the bilayer. The Cytoplasmic segment spans residues 153 to 619 (RKIASRSSES…FKEDFASILD (467 aa)). 224–231 (GPPGTGKT) serves as a coordination point for ATP. Residue His447 coordinates Zn(2+). The active site involves Glu448. Residues His451 and Asp522 each contribute to the Zn(2+) site.

It in the central section; belongs to the AAA ATPase family. In the C-terminal section; belongs to the peptidase M41 family. Homohexamer. Zn(2+) is required as a cofactor.

Its subcellular location is the cell inner membrane. In terms of biological role, acts as a processive, ATP-dependent zinc metallopeptidase for both cytoplasmic and membrane proteins. Plays a role in the quality control of integral membrane proteins. The protein is ATP-dependent zinc metalloprotease FtsH of Karelsulcia muelleri (strain DMIN) (Sulcia muelleri).